Reading from the N-terminus, the 542-residue chain is MAGQTTVDSRRQPPEEVDVLVVGAGFSGLYALYRLRELGRSVHVIETAGDVGGVWYWNRYPGARCDIESIEYCYSFSEEVLQEWNWTERYASQPEILRYINFVADKFDLRSGITFHTTVTAAAFDEATNTWTVDTNHGDRIRARYLIMASGQLSVPQLPNFPGLKDFAGNLYHTGNWPHEPVDFSGQRVGVIGTGSSGIQVSPQIAKQAAELFVFQRTPHFAVPARNAPLDPEFLADLKKRYAEFREESRNTPGGTHRYQGPKSALEVSDEELVETLERYWQEGGPDILAAYRDILRDRDANERVAEFIRNKIRNTVRDPEVAERLVPKGYPFGTKRLILEIDYYEMFNRDNVHLVDTLSAPIETITPRGVRTSEREYELDSLVLATGFDALTGALFKIDIRGVGNVALKEKWAAGPRTYLGLSTAGFPNLFFIAGPGSPSALSNMLVSIEQHVEWVTDHIAYMFKNGLTRSEAVLEKEDEWVEHVNEIADETLYPMTASWYTGANVPGKPRVFMLYVGGFHRYRQICDEVAAKGYEGFVLT.

FAD contacts are provided by residues Ser-27, Glu-46, Val-54–Trp-57, Asp-66, Tyr-72, Val-119, and Gln-152. Arg-64–Asp-66 provides a ligand contact to NADP(+). Residues Thr-194–Gln-200, Arg-217–Thr-218, and Lys-336–Arg-337 contribute to the NADP(+) site. Position 446 (Met-446) interacts with FAD. Trp-501 contacts NADP(+).

This sequence belongs to the FAD-binding monooxygenase family. Monomer. FAD is required as a cofactor.

It carries out the reaction phenylacetone + NADPH + O2 + H(+) = benzyl acetate + NADP(+) + H2O. Its function is as follows. Catalyzes a Baeyer-Villiger oxidation reaction, i.e. the insertion of an oxygen atom into a carbon-carbon bond adjacent to a carbonyl, which converts ketones to esters. Is most efficient with phenylacetone as substrate, leading to the formation of benzyl acetate. Can also oxidize other aromatic ketones (benzylacetone, alpha-methylphenylacetone and 4-hydroxyacetophenone), some aliphatic ketones (dodecan-2-one and bicyclohept-2-en-6-one) and sulfides (e.g. methyl 4-tolylsulfide). The polypeptide is Phenylacetone monooxygenase (pamO) (Thermobifida fusca (strain YX)).